Consider the following 308-residue polypeptide: Ribosome maturation factor RimP (308 aa).

3 disordered regions span residues 1 to 31, 94 to 113, and 249 to 308; these read MARAGESGRAGVRRSTAPSRRTGGARAAADA, EDIGTDGAGGTGGSGGAAGG, and DLDE…EMNR. Low complexity predominate over residues 17–31; sequence APSRRTGGARAAADA. A compositionally biased stretch (gly residues) spans 99–113; that stretch reads DGAGGTGGSGGAAGG. Residues 249–269 show a composition bias toward acidic residues; that stretch reads DLDEGLEDDDGLEDEDDEDEY.

The protein belongs to the RimP family.

It is found in the cytoplasm. Required for maturation of 30S ribosomal subunits. The polypeptide is Ribosome maturation factor RimP (Parafrankia sp. (strain EAN1pec)).